The chain runs to 97 residues: Small ribosomal subunit protein bS6 (97 aa).

It belongs to the bacterial ribosomal protein bS6 family.

In terms of biological role, binds together with bS18 to 16S ribosomal RNA. The protein is Small ribosomal subunit protein bS6 of Listeria innocua serovar 6a (strain ATCC BAA-680 / CLIP 11262).